Reading from the N-terminus, the 463-residue chain is Argininosuccinate lyase (463 aa).

It belongs to the lyase 1 family. Argininosuccinate lyase subfamily.

The protein resides in the cytoplasm. It catalyses the reaction 2-(N(omega)-L-arginino)succinate = fumarate + L-arginine. Its pathway is amino-acid biosynthesis; L-arginine biosynthesis; L-arginine from L-ornithine and carbamoyl phosphate: step 3/3. This is Argininosuccinate lyase from Bradyrhizobium sp. (strain BTAi1 / ATCC BAA-1182).